The following is a 530-amino-acid chain: Glucocorticoid modulatory element-binding protein 2 (530 aa).

One can recognise an SAND domain in the interval Glu81–Asp163. Cys110 lines the Zn(2+) pocket. 4 residues coordinate DNA: Lys136, Lys140, Lys143, and Arg154. Lys155 participates in a covalent cross-link: Glycyl lysine isopeptide (Lys-Gly) (interchain with G-Cter in SUMO1); alternate. Residue Lys155 forms a Glycyl lysine isopeptide (Lys-Gly) (interchain with G-Cter in SUMO2); alternate linkage. 3 residues coordinate Zn(2+): His167, Cys171, and Cys175. 2 coiled-coil regions span residues Leu245–Asp270 and Gln304–Leu344. Ser373 carries the phosphoserine modification.

As to quaternary structure, homodimer, and heterodimer of GMEB1 and GMEB2. Interacts with the glucocorticoid receptor (NR3C1). May interact with CREB-binding protein (CBP).

The protein localises to the nucleus. Its subcellular location is the cytoplasm. In terms of biological role, trans-acting factor that binds to glucocorticoid modulatory elements (GME) present in the TAT (tyrosine aminotransferase) promoter and increases sensitivity to low concentrations of glucocorticoids. Also binds to the transferrin receptor promoter. This chain is Glucocorticoid modulatory element-binding protein 2 (Gmeb2), found in Mus musculus (Mouse).